Consider the following 268-residue polypeptide: Small ribosomal subunit protein eS1 (268 aa).

Positions 1–21 are disordered; it reads MAVGKNKGLSKGGKKGGKKKV.

The protein belongs to the eukaryotic ribosomal protein eS1 family. As to quaternary structure, component of the small ribosomal subunit. Mature ribosomes consist of a small (40S) and a large (60S) subunit. The 40S subunit contains about 33 different proteins and 1 molecule of RNA (18S). The 60S subunit contains about 49 different proteins and 3 molecules of RNA (28S, 5.8S and 5S).

The protein resides in the cytoplasm. In terms of biological role, essential for oogenesis; required for late follicle cell development. This Drosophila mojavensis (Fruit fly) protein is Small ribosomal subunit protein eS1.